Consider the following 178-residue polypeptide: Ribosome maturation factor RimP (178 aa).

This sequence belongs to the RimP family.

The protein localises to the cytoplasm. Its function is as follows. Required for maturation of 30S ribosomal subunits. This chain is Ribosome maturation factor RimP, found in Streptococcus pyogenes serotype M3 (strain ATCC BAA-595 / MGAS315).